Reading from the N-terminus, the 388-residue chain is Succinyl-diaminopimelate desuccinylase (388 aa).

H75 contacts Zn(2+). Residue D77 is part of the active site. Position 108 (D108) interacts with Zn(2+). E142 (proton acceptor) is an active-site residue. Zn(2+)-binding residues include E143, E171, and H361.

Belongs to the peptidase M20A family. DapE subfamily. As to quaternary structure, homodimer. Requires Zn(2+) as cofactor. It depends on Co(2+) as a cofactor.

The enzyme catalyses N-succinyl-(2S,6S)-2,6-diaminopimelate + H2O = (2S,6S)-2,6-diaminopimelate + succinate. It participates in amino-acid biosynthesis; L-lysine biosynthesis via DAP pathway; LL-2,6-diaminopimelate from (S)-tetrahydrodipicolinate (succinylase route): step 3/3. Its function is as follows. Catalyzes the hydrolysis of N-succinyl-L,L-diaminopimelic acid (SDAP), forming succinate and LL-2,6-diaminopimelate (DAP), an intermediate involved in the bacterial biosynthesis of lysine and meso-diaminopimelic acid, an essential component of bacterial cell walls. The protein is Succinyl-diaminopimelate desuccinylase of Methylocella silvestris (strain DSM 15510 / CIP 108128 / LMG 27833 / NCIMB 13906 / BL2).